Reading from the N-terminus, the 704-residue chain is Elongation factor G (704 aa).

The region spanning Glu8–Asn290 is the tr-type G domain. Residues Ala17–Thr24, Asp88–His92, and Asn142–Asp145 each bind GTP.

Belongs to the TRAFAC class translation factor GTPase superfamily. Classic translation factor GTPase family. EF-G/EF-2 subfamily.

It localises to the cytoplasm. Functionally, catalyzes the GTP-dependent ribosomal translocation step during translation elongation. During this step, the ribosome changes from the pre-translocational (PRE) to the post-translocational (POST) state as the newly formed A-site-bound peptidyl-tRNA and P-site-bound deacylated tRNA move to the P and E sites, respectively. Catalyzes the coordinated movement of the two tRNA molecules, the mRNA and conformational changes in the ribosome. The polypeptide is Elongation factor G (Francisella tularensis subsp. mediasiatica (strain FSC147)).